A 184-amino-acid polypeptide reads, in one-letter code: MGVIQTLDSLMTNPMPEGRVEDILRPEGENPLLEKGYVTTSVDALLNWARTGSMWPMTFGLACCAVEMMHAGASRLDLDRYGVVFRPSPRQSDVMIVAGTLVNKMAPALRKVYDQMPDPKWVISMGSCANGGGYYHYSYSVVRGCDRIVPVDIYVPGCPPTAEALVYGILQLQKKIWRTQTIAR.

[4Fe-4S] cluster contacts are provided by C63, C64, C128, and C158.

It belongs to the complex I 20 kDa subunit family. As to quaternary structure, NDH-1 is composed of 14 different subunits. Subunits NuoB, C, D, E, F, and G constitute the peripheral sector of the complex. Requires [4Fe-4S] cluster as cofactor.

It localises to the cell inner membrane. The catalysed reaction is a quinone + NADH + 5 H(+)(in) = a quinol + NAD(+) + 4 H(+)(out). In terms of biological role, NDH-1 shuttles electrons from NADH, via FMN and iron-sulfur (Fe-S) centers, to quinones in the respiratory chain. The immediate electron acceptor for the enzyme in this species is believed to be ubiquinone. Couples the redox reaction to proton translocation (for every two electrons transferred, four hydrogen ions are translocated across the cytoplasmic membrane), and thus conserves the redox energy in a proton gradient. The polypeptide is NADH-quinone oxidoreductase subunit B (Xanthomonas axonopodis pv. citri (strain 306)).